A 553-amino-acid chain; its full sequence is Putative transport protein PM1071 (553 aa).

5 helical membrane-spanning segments follow: residues 4–24 (IAITISLLALVAVIGLWIGHW), 28–48 (GVGLGIGGVLFGGIIVAHFTN), 65–85 (FGLILFVYTIGIQVGPGFFAS), 91–111 (LKLNGFAALIVLLGSLAVIVI), and 157–177 (MAYAMAYPFGICGILLSMWLI). 2 RCK C-terminal domains span residues 190 to 276 (KNFL…VLGE) and 277 to 361 (EVDV…ILGN). The next 6 membrane-spanning stretches (helical) occupy residues 371–391 (MLPVFIGIGLGVLLGSIPFHI), 403–425 (AGGPLVVALILARIGSIGKLYWF), 439–459 (IVLFLAVVGLKSGGNFVDTLV), 464–484 (LEWMVYGIFITFVPLMIVGIV), 496–516 (LCGLLAGSMTDPPALAFANAI), and 533–553 (LVMFLRIISPQLLAILLWTLL).

Belongs to the AAE transporter (TC 2.A.81) family. YidE subfamily.

It is found in the cell membrane. In Pasteurella multocida (strain Pm70), this protein is Putative transport protein PM1071.